The primary structure comprises 848 residues: Adenylate cyclase (848 aa).

The segment at 1 to 535 is catalytic; that stretch reads MYLYIETLKQ…DVSHHFPLRL (535 aa). Positions 541–848 are regulatory; it reads KALYSPCEIR…DAPLLQQYFS (308 aa). Histidine 609 is modified (phosphohistidine; by CRR).

This sequence belongs to the adenylyl cyclase class-1 family.

The protein localises to the cytoplasm. The catalysed reaction is ATP = 3',5'-cyclic AMP + diphosphate. This Escherichia coli O6:H1 (strain CFT073 / ATCC 700928 / UPEC) protein is Adenylate cyclase (cyaA).